We begin with the raw amino-acid sequence, 677 residues long: Fermitin family homolog 1 (677 aa).

An FERM domain is found at 96–653 (MLRLRLPNLK…HEYIGGYIFL (558 aa)). 3 positions are modified to phosphoserine: Ser170, Ser179, and Ser361. Residues 377 to 473 (KLFRPKKLLP…WMAACMLASK (97 aa)) enclose the PH domain.

This sequence belongs to the kindlin family. Interacts with the cytoplasmic domain of integrins ITGB1 and ITGB3. In terms of tissue distribution, expressed in brain, skeletal muscle, kidney, colon, adrenal gland, prostate, and placenta. Weakly or not expressed in heart, thymus, spleen, liver, small intestine, bone marrow, lung and peripheral blood leukocytes. Overexpressed in some colon and lung tumors. In skin, it is localized within the epidermis and particularly in basal keratocytes. Not detected in epidermal melanocytes and dermal fibroblasts.

Its subcellular location is the cytoplasm. The protein localises to the cytoskeleton. It is found in the cell junction. The protein resides in the focal adhesion. It localises to the cell projection. Its subcellular location is the ruffle membrane. Involved in cell adhesion. Contributes to integrin activation. When coexpressed with talin, potentiates activation of ITGA2B. Required for normal keratinocyte proliferation. Required for normal polarization of basal keratinocytes in skin, and for normal cell shape. Required for normal adhesion of keratinocytes to fibronectin and laminin, and for normal keratinocyte migration to wound sites. May mediate TGF-beta 1 signaling in tumor progression. This chain is Fermitin family homolog 1 (FERMT1), found in Homo sapiens (Human).